The following is a 137-amino-acid chain: Bombinin-like peptides 2 (137 aa).

An N-terminal signal peptide occupies residues 1-18 (MNFKYIVAVSILIASAYA). Asn70 is modified (asparagine amide). The segment at 92–112 (DSLEHPEEASEKETRGFNQEE) is disordered. Ile136 carries the post-translational modification Isoleucine amide.

The protein belongs to the bombinin family. As to expression, expressed by the skin glands.

It localises to the secreted. In terms of biological role, bombinin-like peptide 2 has antimicrobial activity, but no hemolytic activity. Preliminary evidence indicates that this peptide does not lyse and thus kill the bacteria by its antimicrobial activity. Bombinin H2 has antibacterial and hemolytic activity. The polypeptide is Bombinin-like peptides 2 (Bombina variegata (Yellow-bellied toad)).